Here is a 478-residue protein sequence, read N- to C-terminus: Cytochrome c-552 (478 aa).

Residues 1–26 (MTRIKINARRIFSLLIPFFFFTSVHA) form the signal peptide. Heme c is bound at residue H94. Heme-binding residues include C122, C125, and K126. Heme c is bound by residues C160, C163, H164, C209, C212, and H213. Positions 215, 216, 261, and 263 each coordinate Ca(2+). Y216 is a substrate binding site. H264 contacts substrate. Positions 275, 282, 285, 286, 301, 314, 317, 318, and 393 each coordinate heme c.

This sequence belongs to the cytochrome c-552 family. The cofactor is Ca(2+). Heme c is required as a cofactor.

The protein localises to the periplasm. The enzyme catalyses 6 Fe(III)-[cytochrome c] + NH4(+) + 2 H2O = 6 Fe(II)-[cytochrome c] + nitrite + 8 H(+). It functions in the pathway nitrogen metabolism; nitrate reduction (assimilation). Its function is as follows. Catalyzes the reduction of nitrite to ammonia, consuming six electrons in the process. This Escherichia coli O17:K52:H18 (strain UMN026 / ExPEC) protein is Cytochrome c-552.